We begin with the raw amino-acid sequence, 566 residues long: Transcription factor P14E8.02 (566 aa).

Residues 1–32 are disordered; the sequence is MNISSQNVLLPSPIPSSSPMASHKKSWLSKHP. Serine 73 bears the Phosphoserine mark. An FHA domain is found at 86–137; sequence NKIGRSSQQCDHVLSTVDKAISRVHAIVTCTQDRMIIECVGWNGMIVSDKMR. Disordered stretches follow at residues 191 to 217, 269 to 291, 312 to 334, and 364 to 437; these read EENREPMSPSPQEALPLMPSSPPSQDY, DCSKNTQLKPSFLPKNTDDLLNG, ESDDLDKNEEISEGEEYTPIEES, and FTNH…TKEN. Residues 314–330 are compositionally biased toward acidic residues; sequence DDLDKNEEISEGEEYTP. Composition is skewed to polar residues over residues 373–383 and 414–428; these read NSNITTSNDSP and DENTNDSNESLPSSH. A phosphoserine mark is found at serine 379 and serine 382.

It belongs to the PLM2/TOS4 family.

The protein resides in the nucleus. Probable transcriptional regulatory protein Required for G1/S progression. This is Transcription factor P14E8.02 from Schizosaccharomyces pombe (strain 972 / ATCC 24843) (Fission yeast).